A 108-amino-acid chain; its full sequence is Class I hydrophobin 3 (108 aa).

An N-terminal signal peptide occupies residues 1–17 (MFFQTTIVAALASLAVA). Disulfide bonds link Cys28/Cys87, Cys35/Cys81, Cys36/Cys69, and Cys88/Cys101. Asn37 carries N-linked (GlcNAc...) asparagine glycosylation.

It belongs to the fungal hydrophobin family. In terms of assembly, self-assembles to form functional amyloid fibrils called rodlets. Self-assembly into fibrillar rodlets occurs spontaneously at hydrophobic:hydrophilic interfaces and the rodlets further associate laterally to form amphipathic monolayers.

The protein localises to the secreted. The protein resides in the cell wall. Its function is as follows. Aerial growth, conidiation, and dispersal of filamentous fungi in the environment rely upon a capability of their secreting small amphipathic proteins called hydrophobins (HPBs) with low sequence identity. Class I can self-assemble into an outermost layer of rodlet bundles on aerial cell surfaces, conferring cellular hydrophobicity that supports fungal growth, development and dispersal; whereas Class II form highly ordered films at water-air interfaces through intermolecular interactions but contribute nothing to the rodlet structure. Vmh3 is a class I hydrophobin that is essential for the maintenance of the surface hydrophobicity of the mycelium and might be involved in the development of fruiting bodies. Plays an important role in hyphal resistance against environmental stress. Necessary for the efficient biodegradation of lignin. This chain is Class I hydrophobin 3, found in Pleurotus ostreatus (strain PC15) (Oyster mushroom).